The sequence spans 271 residues: Putative phosphoenolpyruvate synthase regulatory protein (271 aa).

151 to 158 provides a ligand contact to ADP; the sequence is GVSRSGKT.

It belongs to the pyruvate, phosphate/water dikinase regulatory protein family. PSRP subfamily.

It catalyses the reaction [pyruvate, water dikinase] + ADP = [pyruvate, water dikinase]-phosphate + AMP + H(+). The enzyme catalyses [pyruvate, water dikinase]-phosphate + phosphate + H(+) = [pyruvate, water dikinase] + diphosphate. Bifunctional serine/threonine kinase and phosphorylase involved in the regulation of the phosphoenolpyruvate synthase (PEPS) by catalyzing its phosphorylation/dephosphorylation. The chain is Putative phosphoenolpyruvate synthase regulatory protein from Burkholderia vietnamiensis (strain G4 / LMG 22486) (Burkholderia cepacia (strain R1808)).